The sequence spans 188 residues: Photosystem I assembly protein Ycf4 (188 aa).

2 consecutive transmembrane segments (helical) span residues 28–48 and 68–88; these read WATVITIGGTGFFLAGLSSYL and IAIGFYGVAALLLAIYLWATI.

It belongs to the Ycf4 family.

The protein localises to the cellular thylakoid membrane. Seems to be required for the assembly of the photosystem I complex. The sequence is that of Photosystem I assembly protein Ycf4 from Cyanothece sp. (strain PCC 7425 / ATCC 29141).